The chain runs to 293 residues: Ribonuclease Z (293 aa).

7 residues coordinate Zn(2+): H60, H62, D64, H65, H132, D200, and H256. The active-site Proton acceptor is D64.

Belongs to the RNase Z family. Homodimer. Requires Zn(2+) as cofactor.

The catalysed reaction is Endonucleolytic cleavage of RNA, removing extra 3' nucleotides from tRNA precursor, generating 3' termini of tRNAs. A 3'-hydroxy group is left at the tRNA terminus and a 5'-phosphoryl group is left at the trailer molecule.. Its function is as follows. Zinc phosphodiesterase, which displays some tRNA 3'-processing endonuclease activity. Probably involved in tRNA maturation, by removing a 3'-trailer from precursor tRNA. This Sulfurisphaera tokodaii (strain DSM 16993 / JCM 10545 / NBRC 100140 / 7) (Sulfolobus tokodaii) protein is Ribonuclease Z.